The sequence spans 257 residues: MSMVETAPSKIQVRDLNFYYGKFHALKNINLDIAKNQVTAFIGPSGCGKSTLLRTFNKMYSLYPEQRAEGEILLDGDNILTNTQDIALLRAKVGMVFQKPTPFPMSIYDNIAFGVRLFEKLSRADMDERVQWALTKAALWNETKDKLHQSGYSLSGGQQQRLCIARGIAIRPEVLLLDEPCSALDPISTGRIEELITELKQDYTVVIVTHNMQQAARCSDHTAFMYLGELIEFSNTDDLFTKPAKKQTEDYITGRYG.

Residues 11–252 enclose the ABC transporter domain; it reads IQVRDLNFYY…PAKKQTEDYI (242 aa). Residue 43–50 coordinates ATP; that stretch reads GPSGCGKS.

Belongs to the ABC transporter superfamily. Phosphate importer (TC 3.A.1.7) family. In terms of assembly, the complex is composed of two ATP-binding proteins (PstB), two transmembrane proteins (PstC and PstA) and a solute-binding protein (PstS).

It is found in the cell inner membrane. It catalyses the reaction phosphate(out) + ATP + H2O = ADP + 2 phosphate(in) + H(+). Its function is as follows. Part of the ABC transporter complex PstSACB involved in phosphate import. Responsible for energy coupling to the transport system. This Salmonella paratyphi A (strain ATCC 9150 / SARB42) protein is Phosphate import ATP-binding protein PstB.